The chain runs to 545 residues: MTTNYIFVTGGVVSSLGKGIAAASLAAILEARGLKVTMMKLDPYINVDPGTMSPTQHGEVFVTEDGAETDLDLGHYERFIRTKMTKRNNFTAGRVYSDVLAKERRGDYLGATIQVIPHITNDIKDRVINGSQGHDVAIVEVGGTVGDIESLPFMEAIRQLAVEIGRERAMFMHLTLVPYLAAAGEVKTKPTQHSVKELLSIGIQPDILVCRSDRMIPANERKKIALFCNVPEKAVISMKDVDSIYKIPQLIKSQGLDDLVCARFGINAPEADLSEWEQVIYEEANPTGEVTIGMVGKYIELPDAYKSVNEALKHAGLKNRLSVNIKYVDSQDVETKGVEVLQGLDAILVPGGFGDRGIEGKILAAKYARENKVPYLGICLGMQVALIEYARNVAGMEGAHSTEFNKDTKYPVVGLITEWVDSEGNVEERTESSNLGGTMRLGSQLCHLAKGTKARELYGSDTIHERHRHRYEVNNNLRPQIEKAGLKVSGLSADKKLVEMIENPNHPWFVAAQFHPEFTSTPRDGHPLFSGFIKAAGENARGELK.

Positions 1 to 266 (MTTNYIFVTG…DDLVCARFGI (266 aa)) are amidoligase domain. Serine 14 serves as a coordination point for CTP. Position 14 (serine 14) interacts with UTP. ATP is bound by residues 15-20 (SLGKGI) and aspartate 72. Aspartate 72 and glutamate 140 together coordinate Mg(2+). CTP is bound by residues 147–149 (DIE), 187–192 (KTKPTQ), and lysine 223. Residues 187–192 (KTKPTQ) and lysine 223 each bind UTP. An ATP-binding site is contributed by 239 to 241 (KDV). The region spanning 291–542 (TIGMVGKYIE…IKAAGENARG (252 aa)) is the Glutamine amidotransferase type-1 domain. An L-glutamine-binding site is contributed by glycine 352. Cysteine 379 functions as the Nucleophile; for glutamine hydrolysis in the catalytic mechanism. L-glutamine contacts are provided by residues 380–383 (LGMQ), glutamate 403, and arginine 470. Residues histidine 515 and glutamate 517 contribute to the active site.

This sequence belongs to the CTP synthase family. Homotetramer.

It carries out the reaction UTP + L-glutamine + ATP + H2O = CTP + L-glutamate + ADP + phosphate + 2 H(+). The enzyme catalyses L-glutamine + H2O = L-glutamate + NH4(+). It catalyses the reaction UTP + NH4(+) + ATP = CTP + ADP + phosphate + 2 H(+). It participates in pyrimidine metabolism; CTP biosynthesis via de novo pathway; CTP from UDP: step 2/2. Allosterically activated by GTP, when glutamine is the substrate; GTP has no effect on the reaction when ammonia is the substrate. The allosteric effector GTP functions by stabilizing the protein conformation that binds the tetrahedral intermediate(s) formed during glutamine hydrolysis. Inhibited by the product CTP, via allosteric rather than competitive inhibition. Functionally, catalyzes the ATP-dependent amination of UTP to CTP with either L-glutamine or ammonia as the source of nitrogen. Regulates intracellular CTP levels through interactions with the four ribonucleotide triphosphates. The polypeptide is CTP synthase (Vibrio vulnificus (strain CMCP6)).